The sequence spans 515 residues: Cytochrome P450 76C3 (515 aa).

The chain crosses the membrane as a helical span at residues 5–25 (LIQGMSLPLYFLLTLFFFFFA). Cysteine 451 contacts heme.

The protein belongs to the cytochrome P450 family. It depends on heme as a cofactor.

The protein localises to the membrane. In Arabidopsis thaliana (Mouse-ear cress), this protein is Cytochrome P450 76C3 (CYP76C3).